Here is a 340-residue protein sequence, read N- to C-terminus: Large ribosomal subunit protein uL29m (340 aa).

Polar residues predominate over residues Met1–Val10. Residues Met1–Pro22 form a disordered region.

It belongs to the universal ribosomal protein uL29 family. In terms of assembly, component of the mitochondrial large ribosomal subunit. Mature mitochondrial ribosomes consist of a small (37S) and a large (54S) subunit. The 37S subunit contains at least 33 different proteins and 1 molecule of RNA (15S). The 54S subunit contains at least 45 different proteins and 1 molecule of RNA (21S).

It is found in the mitochondrion. In Yarrowia lipolytica (strain CLIB 122 / E 150) (Yeast), this protein is Large ribosomal subunit protein uL29m (MRPL4).